The primary structure comprises 402 residues: Putative cytochrome P450 123 (402 aa).

Cys-350 serves as a coordination point for heme.

It belongs to the cytochrome P450 family. Heme serves as cofactor.

This is Putative cytochrome P450 123 (cyp123) from Mycobacterium bovis (strain ATCC BAA-935 / AF2122/97).